The chain runs to 550 residues: (S)-beta-bisabolene synthase (550 aa).

Residues Asp-303, Asp-307, Ser-451, and Glu-455 each coordinate Mg(2+). The DDXXD motif motif lies at 303-307 (DDTYD).

The protein belongs to the terpene synthase family. Tpsa subfamily. The cofactor is Mg(2+). It depends on Mn(2+) as a cofactor. Expressed only in young rhizomes. Not detected in leaves, roots and mature rhizomes.

It carries out the reaction (2E,6E)-farnesyl diphosphate = (S)-beta-bisabolene + diphosphate. Sesquiterpene synthase involved in the biosynthesis of bisabolene. The sequence is that of (S)-beta-bisabolene synthase (TPS1) from Zingiber officinale (Ginger).